The following is an 86-amino-acid chain: Cell division topological specificity factor (86 aa).

This sequence belongs to the MinE family.

Prevents the cell division inhibition by proteins MinC and MinD at internal division sites while permitting inhibition at polar sites. This ensures cell division at the proper site by restricting the formation of a division septum at the midpoint of the long axis of the cell. This chain is Cell division topological specificity factor, found in Aliivibrio salmonicida (strain LFI1238) (Vibrio salmonicida (strain LFI1238)).